Here is a 156-residue protein sequence, read N- to C-terminus: Small ribosomal subunit protein uS7 (156 aa).

It belongs to the universal ribosomal protein uS7 family. Part of the 30S ribosomal subunit. Contacts proteins S9 and S11.

In terms of biological role, one of the primary rRNA binding proteins, it binds directly to 16S rRNA where it nucleates assembly of the head domain of the 30S subunit. Is located at the subunit interface close to the decoding center, probably blocks exit of the E-site tRNA. This is Small ribosomal subunit protein uS7 from Coprothermobacter proteolyticus (strain ATCC 35245 / DSM 5265 / OCM 4 / BT).